The chain runs to 181 residues: Reverse rubrerythrin-1 (181 aa).

The Rubredoxin-like domain occupies 1 to 35; sequence MKKFKCVVCGYIYTGEDAPEKCPVCGAGKDKFVEV. Positions 6, 9, 22, 25, 69, 102, 132, 165, and 168 each coordinate Fe cation. Residues 52 to 181 form the Ferritin-like diiron domain; the sequence is KGVDKEVLEG…FRGLLNRYFK (130 aa).

In terms of assembly, homodimer. Fe(3+) serves as cofactor.

The enzyme catalyses H2O2 + NADH + H(+) = NAD(+) + 2 H2O. Its function is as follows. Functions as the terminal component of an NADH peroxidase (NADH:H(2)O(2) oxidoreductase) when using NADH:rubredoxin oxidoreductase (NROR) and rubredoxin (Rd) as electron transport intermediaries from NADH to revRbr 1. Plays an important role in the oxidative stress defense system in C.acetobutylicum, an obligate anaerobic bacterium. Also exhibits NADH oxidase (NADH:O(2) oxidoreductase) activity in vitro, which is 100-fold lesser than that of FprA1/2 using the same electron transfer components. Therefore, its predominant function is most likely as a scavenger of its preferred substrate, H(2)O(2). The polypeptide is Reverse rubrerythrin-1 (rbr3A) (Clostridium acetobutylicum (strain ATCC 824 / DSM 792 / JCM 1419 / IAM 19013 / LMG 5710 / NBRC 13948 / NRRL B-527 / VKM B-1787 / 2291 / W)).